A 1156-amino-acid chain; its full sequence is Nuclear pore-associated protein 1 (1156 aa).

8 disordered regions span residues 1 to 60 (MGNL…RRPS), 155 to 204 (EGPR…FRCS), 219 to 266 (NSMS…PEPA), 481 to 515 (GGSY…TRES), 680 to 703 (TLVN…MHTT), 732 to 786 (NTQP…KTSL), 872 to 915 (STSF…SSFI), and 1026 to 1046 (APGP…SGTP). The segment covering 50–59 (LFRRNARRRP) has biased composition (basic residues). Over residues 156 to 165 (GPRRVKKDED) the composition is skewed to basic and acidic residues. Composition is skewed to polar residues over residues 179-197 (PLSS…TQGD) and 219-231 (NSMS…SPAS). Polar residues-rich tracts occupy residues 680–692 (TLVN…SSSK), 732–750 (NTQP…SLPA), 884–915 (TTTS…SSFI), and 1028–1046 (GPSS…SGTP).

As to quaternary structure, associates with the nuclear pore complex (NPC). As to expression, testis-specific in adults. In fetal brain expressed only from the paternal allele.

The protein resides in the nucleus. It localises to the nucleoplasm. Its subcellular location is the nucleus inner membrane. Functionally, may be involved in spermatogenesis. This Homo sapiens (Human) protein is Nuclear pore-associated protein 1 (NPAP1).